We begin with the raw amino-acid sequence, 129 residues long: Phosphoribosyl-AMP cyclohydrolase (129 aa).

Asp76 serves as a coordination point for Mg(2+). Position 77 (Cys77) interacts with Zn(2+). The Mg(2+) site is built by Asp78 and Asp80. The Zn(2+) site is built by Cys97 and Cys104.

It belongs to the PRA-CH family. In terms of assembly, homodimer. Requires Mg(2+) as cofactor. It depends on Zn(2+) as a cofactor.

It localises to the cytoplasm. It carries out the reaction 1-(5-phospho-beta-D-ribosyl)-5'-AMP + H2O = 1-(5-phospho-beta-D-ribosyl)-5-[(5-phospho-beta-D-ribosylamino)methylideneamino]imidazole-4-carboxamide. Its pathway is amino-acid biosynthesis; L-histidine biosynthesis; L-histidine from 5-phospho-alpha-D-ribose 1-diphosphate: step 3/9. Functionally, catalyzes the hydrolysis of the adenine ring of phosphoribosyl-AMP. This is Phosphoribosyl-AMP cyclohydrolase from Polaromonas sp. (strain JS666 / ATCC BAA-500).